Consider the following 692-residue polypeptide: Furin-like protease kpc-1 (692 aa).

Positions 1-33 (MSNISWYRHCSVRLQLVTLALFLLLGSASLGSA) are cleaved as a signal peptide. Asn3 carries N-linked (GlcNAc...) asparagine glycosylation. A propeptide spanning residues 34 to 139 (HIDEEFEDDV…QQVAKRRVKR (106 aa)) is cleaved from the precursor. The Lumenal portion of the chain corresponds to 140 to 670 (GYRRIRRHTD…RSVQMEATSS (531 aa)). The disordered stretch occupies residues 152-177 (DIFEEDDDGTQISKSRNRKHPDPNDP). Asp176 contributes to the Ca(2+) binding site. One can recognise a Peptidase S8 domain in the interval 182 to 503 (MWYLNRGEHH…YGLMDAGAMV (322 aa)). Asp221 (charge relay system) is an active-site residue. Asp222 contributes to the substrate binding site. Positions 230, 242, 247, and 249 each coordinate Ca(2+). Residues 230–249 (DISPNYDERASYDVNDRDND) form a disordered region. A substrate-binding site is contributed by 259–260 (EN). His262 (charge relay system) is an active-site residue. A Ca(2+)-binding site is contributed by Ile273. Asn275 is a glycosylation site (N-linked (GlcNAc...) asparagine). Asn276, Leu278, and Ile280 together coordinate Ca(2+). 2 cysteine pairs are disulfide-bonded: Cys279–Cys428 and Cys371–Cys401. Substrate is bound by residues Glu304, 321–326 (SWGPDD), Asp332, and 360–363 (ASGN). Asp326 contributes to the Ca(2+) binding site. Asp369 is a Ca(2+) binding site. Substrate-binding residues include Asp374 and Tyr376. Glu399 serves as a coordination point for Ca(2+). Ser436 serves as the catalytic Charge relay system. Substrate is bound at residue Ser436. 2 N-linked (GlcNAc...) asparagine glycosylation sites follow: Asn455 and Asn487. Residues 512–646 (VDEQHRCRQF…ELVLYGTDRE (135 aa)) enclose the P/Homo B domain. The cysteines at positions 518 and 544 are disulfide-linked. Positions 570 to 572 (RGD) match the Cell attachment site motif. Residues 671-692 (GTQYSIFHVITLVILTFSQILY) traverse the membrane as a helical segment.

It belongs to the peptidase S8 family. Furin subfamily. In terms of assembly, interacts (via extracellular domain) with receptor dma-1 (via extracellular domain); the interaction promotes dma-1 internalization. The cofactor is Ca(2+). In terms of tissue distribution, expressed in the nervous system including the ventral nerve cord, the nerve ring and the retrovesicular ganglion, and in epithelial cells. Expressed in IL2 neurons. Expressed in PVD mechanosensory neurons. Expressed in pharynx with strong expression in the g2 pharyngeal gland cells and vpi pharyngeal intestinal valve cells. Expressed in intestine.

It is found in the cell membrane. Its subcellular location is the perikaryon. The protein localises to the cell projection. The protein resides in the axon. Its function is as follows. Furin-like protease which cleaves proproteins at the RX(K/R)R consensus motif. During neuronal development, regulates the formation and extension of dendrite branches and cellular positioning of various type of neurons. Together with chin-1 and cdc-42, plays a role in the development of the neuropil and is required for the guidance of axons from neurons, including SubL pioneer neurons and AIY interneurons, into the nerve ring. Its role in axon guidance in glia and pioneer neurons may be through ensuring the fmi-1 protein is correctly localized to the nerve ring. Promotes the formation, extension and self-avoidance of dendritic branches of PVD and FLP mechanosensory neurons. In PVD neurons, regulates plasma membrane levels of branching receptor dma-1 by targeting it to late endosomes and thus promotes normal dendrite branching and dendrite self-avoidance. Also controls dendrite extension in AIY and D-type motoneurons, dendrite branching in AQR sensory neurons and VC4/5 motoneurons, the normal number of dendritic branches in AVL neurons and the positioning of HSN and ALM/PLM neurons. Dispensable for maintaining dendrite branching in adults. Also regulates dauer-specific dendritic branching of IL2 neurons and dauer-specific nictation behavior. Under adverse environmental conditions, may promote dauer formation by processing insulin-like proteins ins-1 and ins-18, two daf-2/InsR antagonists. The chain is Furin-like protease kpc-1 from Caenorhabditis elegans.